Reading from the N-terminus, the 454-residue chain is Innexin-19 (454 aa).

The Cytoplasmic segment spans residues 1–48 (MWRTPASTGPLRQDRQMFFHATLARSFINALSVRGDDDAVDRLNYYYT). Residues 49–69 (PLILAVCCLVISAKQYGGTPI) form a helical membrane-spanning segment. At 70 to 118 (ECWVNPHSRESMEEYIESYCWIQNTYWIPMYENVPDDHTAREEKQIGYY) the chain is on the extracellular side. Residues 119-139 (QWVPFILIAEALMFSLPCIFW) traverse the membrane as a helical segment. At 140–214 (RLCSFQSGLN…SRFLSGQCLS (75 aa)) the chain is on the cytoplasmic side. Residues 215 to 235 (ILHSFTKLLYSMNVVAQFLIL) form a helical membrane-spanning segment. The Extracellular segment spans residues 236-300 (NACLKSSDFL…ALLINIINEK (65 aa)). The helical transmembrane segment at 301-321 (VFAFLWCWYMILAIITTCSFI) threads the bilayer. Residues 322–454 (YWIANSFIHS…SNPGQTKSFL (133 aa)) lie on the Cytoplasmic side of the membrane.

Belongs to the pannexin family. In terms of tissue distribution, specifically expressed in sensory neurons and interneurons in the head and tail. Expressed in neurons AWC, ASH, AFD, ASI, ADL, ASK, BAG, AWB, and ADF (head sensory neurons); ADA, AIZ, RIC, AIY, and AIM (head interneurons); PHA and PHB (tail sensory neurons); and PVC and PVQ (tail interneurons).

The protein resides in the cell membrane. Its subcellular location is the cell junction. It localises to the gap junction. Functionally, structural component of the gap junctions that specifically coordinates left-right asymmetry in the developing nervous system. Acts by forming gap junction network linking embryonic neurons and providing electrical coupling between cells, leading to promote or inhibit AWC signaling. Required for the left and right AWC olfactory neurons to establish asymmetric patterns of gene expression during embryogenesis. Acts autonomously. The chain is Innexin-19 (inx-19) from Caenorhabditis elegans.